The primary structure comprises 835 residues: Cap-specific mRNA (nucleoside-2'-O-)-methyltransferase 1 (835 aa).

The tract at residues 1-66 (MKRRNDSECT…TEGKQRSSDS (66 aa)) is disordered. Positions 2-19 (KRRNDSECTAPLKKQKKR) match the Bipartite nuclear localization signal motif. 5 positions are modified to phosphoserine: Ser-28, Ser-31, Ser-53, Ser-66, and Ser-91. Positions 57 to 66 (TEGKQRSSDS) are enriched in basic and acidic residues. In terms of domain architecture, G-patch spans 87–133 (YNSVSQKLMAKMGFKEGEGLGKYSQGRKDIVEASNQKGRRGLGLTLQ). Lys-108 is subject to N6-acetyllysine. Residues 203 to 207 (KSVFD) and Arg-218 each bind substrate. One can recognise a RrmJ-type SAM-dependent 2'-O-MTase domain in the interval 231-450 (FFLNRAAMKM…ERYVVCKGLK (220 aa)). Asn-234 serves as a coordination point for S-adenosyl-L-methionine. Lys-239 is an active-site residue. S-adenosyl-L-methionine-binding positions include 277-283 (CAGPGGF) and 335-336 (DI). The active site involves Asp-364. 374–376 (NLQ) lines the substrate pocket. The active-site Proton acceptor is the Lys-404. Asn-439 is a substrate binding site. Positions 727–835 (SSGTPKLSYT…VLSFIQTHSA (109 aa)) are interaction with POLR2A. A WW domain is found at 752–786 (RTVNEPWTMGFSKSFKRKFFYNKKTKNSTFDLPAD).

Interacts with POLR2A (via C-terminus).

The protein resides in the nucleus. The enzyme catalyses a 5'-end (N(7)-methyl 5'-triphosphoguanosine)-ribonucleoside in mRNA + S-adenosyl-L-methionine = a 5'-end (N(7)-methyl 5'-triphosphoguanosine)-(2'-O-methyl-ribonucleoside) in mRNA + S-adenosyl-L-homocysteine + H(+). Its function is as follows. S-adenosyl-L-methionine-dependent methyltransferase that mediates mRNA cap1 2'-O-ribose methylation to the 5'-cap structure of mRNAs. Methylates the ribose of the first nucleotide of a m(7)GpppG-capped mRNA and small nuclear RNA (snRNA) to produce m(7)GpppRm (cap1). Displays a preference for cap0 transcripts. Cap1 modification is linked to higher levels of translation. May be involved in the interferon response pathway. This Bos taurus (Bovine) protein is Cap-specific mRNA (nucleoside-2'-O-)-methyltransferase 1 (CMTR1).